Reading from the N-terminus, the 441-residue chain is Cytochrome c biogenesis protein Ccs1 (441 aa).

Helical transmembrane passes span 19–39 (LKLA…GTVI), 78–98 (TWWF…CTLA), and 164–184 (IGPI…LLGN).

It belongs to the Ccs1/CcsB family. In terms of assembly, may interact with CcsA.

It localises to the plastid. It is found in the chloroplast thylakoid membrane. In terms of biological role, required during biogenesis of c-type cytochromes (cytochrome c6 and cytochrome f) at the step of heme attachment. This is Cytochrome c biogenesis protein Ccs1 from Rhodomonas salina (Cryptomonas salina).